The following is a 290-amino-acid chain: O-methyltransferase agiB (290 aa).

An S-adenosyl-L-methionine-binding site is contributed by Asp-155. The active-site Proton acceptor is the His-194.

It belongs to the class I-like SAM-binding methyltransferase superfamily. Cation-independent O-methyltransferase family.

It functions in the pathway secondary metabolite biosynthesis. In terms of biological role, O-methyltransferase; part of the gene cluster that mediates the biosynthesis of the aspergillicins A and F, 2 cryptic cyclic hexa-depsipeptides. The hexamodular NRPS agiA catalyzes the condensation of the six amino acid residues including N-Me-L-O-Me-tyrosine, L-proline 1, L-proline 2, D-isoleucine, O-acetyl-threonine, and L-isoleucine. The starting condensation domain (C1) of agiA probably loads acetyl-CoA which is condensed on the N-terminus of threonine by the first module to yield O-acetyl-threonine. The second module then loads L-isoleucine. The epimerase (E) domain on module 2 is probably involved in the formation of the D-isoleucine moiety. Modules 3 and 4 further load 2 successive L-prolines. Module 5 is then involved in the condensation of O-Me-L-tyrosine produced by the O-methyltransferase agiB and the N-methyl transferase (NMeT) domain on module 5 probably catalyzes the N-methylation to yield the N-Me-L-O-Me-tyrosine moiety. The A domain of module 5 loads preferentially O-Me-L-tyrosine, but it can also accept L-phenylalanine, which leads to the production of aspergillicin G. Module 6 then loads the last residue, L-isoleucine. The C-terminal thiolesterase (TE) domain probably cyclizes the peptide using the hydroxy group from threonine to form the cyclic depsipeptide. The sequence is that of O-methyltransferase agiB from Aspergillus flavus (strain ATCC 200026 / FGSC A1120 / IAM 13836 / NRRL 3357 / JCM 12722 / SRRC 167).